The following is a 145-amino-acid chain: Putative sterol 14-demethylase-like protein (145 aa).

Residues 5 to 25 form a helical membrane-spanning segment; that stretch reads YYTLLKTSVAIIIVFVVAKLI.

It belongs to the cytochrome P450 family. Expressed specifically in roots.

It localises to the membrane. This Arabidopsis thaliana (Mouse-ear cress) protein is Putative sterol 14-demethylase-like protein (CYP51G2).